We begin with the raw amino-acid sequence, 545 residues long: Intercellular adhesion molecule 1 (545 aa).

An N-terminal signal peptide occupies residues 1–27; the sequence is MASTRARPMLPLLLVLVAVVIPGPVGA. Residues 28–492 lie on the Extracellular side of the membrane; it reads QVSIHPTEAF…HLTVLYHDQN (465 aa). 2 consecutive Ig-like C2-type domains span residues 41 to 103 and 128 to 193; these read GGSV…QSSA and GKNL…LDLR. N-linked (GlcNAc...) asparagine glycosylation occurs at asparagine 47. Cystine bridges form between cysteine 48/cysteine 92, cysteine 52/cysteine 96, and cysteine 135/cysteine 186. The N-linked (GlcNAc...) asparagine glycan is linked to asparagine 154. The Cell attachment site signature appears at 177–179; sequence RGD. N-linked (GlcNAc...) asparagine glycans are attached at residues asparagine 183 and asparagine 202. The 68-residue stretch at 230 to 297 folds into the Ig-like C2-type 3 domain; it reads GTQQKFLCSL…LRCVLELADQ (68 aa). A disulfide bond links cysteine 237 and cysteine 290. N-linked (GlcNAc...) asparagine glycosylation is found at asparagine 309, asparagine 344, asparagine 396, asparagine 417, asparagine 439, and asparagine 464. In terms of domain architecture, Ig-like C2-type 4 spans 325–389; the sequence is GDQVTVKCEA…FFCSAALEVD (65 aa). An intrachain disulfide couples cysteine 332 to cysteine 382. Residues 343–365 form a disordered region; the sequence is LNSTSPRPPTSQGTSPRPPTSQI. 3 cysteine pairs are disulfide-bonded: cysteine 414-cysteine 430, cysteine 430-cysteine 469, and cysteine 442-cysteine 469. Positions 423–476 constitute an Ig-like C2-type 5 domain; it reads GSQQTLTCQPQGNPAPNLTCSRKADGVPLPIGMVKSVKREMNGTYKCRAFSSRG. A helical transmembrane segment spans residues 493 to 517; sequence TWVIIVGVLVLIIAGFVIVASIYTY. Over 518–545 the chain is Cytoplasmic; the sequence is YRQRKIRIYKLQKAQEEALKLKVQAPPP.

Belongs to the immunoglobulin superfamily. ICAM family. As to quaternary structure, homodimer. Interacts with MUC1 and promotes cell aggregation in epithelial cells. Interacts with ARHGEF26/SGEF. Interacts (on T cell side) with CD81, CD247 and CD9 at immunological synapses between antigen-presenting cells and T cells. Monoubiquitinated, which is promoted by MARCH9 and leads to endocytosis.

Its subcellular location is the membrane. ICAM proteins are ligands for the leukocyte adhesion protein LFA-1 (integrin alpha-L/beta-2). During leukocyte trans-endothelial migration, ICAM1 engagement promotes the assembly of endothelial apical cups through ARHGEF26/SGEF and RHOG activation. In Rattus norvegicus (Rat), this protein is Intercellular adhesion molecule 1 (Icam1).